We begin with the raw amino-acid sequence, 279 residues long: Diaminopimelate epimerase (279 aa).

Substrate contacts are provided by N12, Q45, and N65. The Proton donor role is filled by C74. Residues 75–76 (GN), N162, N195, and 213–214 (ER) contribute to the substrate site. C222 functions as the Proton acceptor in the catalytic mechanism. 223-224 (GS) is a substrate binding site.

The protein belongs to the diaminopimelate epimerase family. Homodimer.

The protein resides in the cytoplasm. The catalysed reaction is (2S,6S)-2,6-diaminopimelate = meso-2,6-diaminopimelate. It participates in amino-acid biosynthesis; L-lysine biosynthesis via DAP pathway; DL-2,6-diaminopimelate from LL-2,6-diaminopimelate: step 1/1. In terms of biological role, catalyzes the stereoinversion of LL-2,6-diaminopimelate (L,L-DAP) to meso-diaminopimelate (meso-DAP), a precursor of L-lysine and an essential component of the bacterial peptidoglycan. This Shewanella loihica (strain ATCC BAA-1088 / PV-4) protein is Diaminopimelate epimerase.